Reading from the N-terminus, the 767-residue chain is 5-methyltetrahydropteroyltriglutamate--homocysteine methyltransferase (767 aa).

Residues 16–19 (RELK) and lysine 122 contribute to the 5-methyltetrahydropteroyltri-L-glutamate site. Residues 443 to 445 (IGS) and glutamate 496 contribute to the L-homocysteine site. Residues 443–445 (IGS) and glutamate 496 contribute to the L-methionine site. 5-methyltetrahydropteroyltri-L-glutamate-binding positions include 527 to 528 (RC) and tryptophan 573. L-homocysteine is bound at residue aspartate 611. Aspartate 611 serves as a coordination point for L-methionine. Glutamate 617 is a binding site for 5-methyltetrahydropteroyltri-L-glutamate. Zn(2+) is bound by residues histidine 653, cysteine 655, and glutamate 677. The active-site Proton donor is the histidine 706. Position 738 (cysteine 738) interacts with Zn(2+).

The protein belongs to the vitamin-B12 independent methionine synthase family. Requires Zn(2+) as cofactor.

It catalyses the reaction 5-methyltetrahydropteroyltri-L-glutamate + L-homocysteine = tetrahydropteroyltri-L-glutamate + L-methionine. The protein operates within amino-acid biosynthesis; L-methionine biosynthesis via de novo pathway; L-methionine from L-homocysteine (MetE route): step 1/1. In terms of biological role, catalyzes the transfer of a methyl group from 5-methyltetrahydrofolate to homocysteine resulting in methionine formation. The sequence is that of 5-methyltetrahydropteroyltriglutamate--homocysteine methyltransferase from Ectopseudomonas mendocina (strain ymp) (Pseudomonas mendocina).